A 528-amino-acid polypeptide reads, in one-letter code: Glycerol kinase 5 (528 aa).

2 residues coordinate ATP: Ser-28 and Ser-29. Positions 98, 275, and 276 each coordinate glycerol. ATP is bound by residues Thr-297, Gly-340, and Gly-440.

Belongs to the FGGY kinase family.

The protein localises to the cytoplasm. The catalysed reaction is glycerol + ATP = sn-glycerol 3-phosphate + ADP + H(+). The protein operates within polyol metabolism; glycerol degradation via glycerol kinase pathway; sn-glycerol 3-phosphate from glycerol: step 1/1. In terms of biological role, skin-specific kinase that plays a key role in glycerol metabolism, catalyzing its phosphorylation to produce sn-glycerol 3-phosphate. Involved in skin-specific regulation of sterol regulatory element-binding protein (SREBP) processing and lipid biosynthesis. In Bos taurus (Bovine), this protein is Glycerol kinase 5 (GK5).